The chain runs to 202 residues: Large ribosomal subunit protein bL9 (202 aa).

The interval 176–202 is disordered; that stretch reads AAGEFFDPDAQHDDEPAAEDDQNAEEK. Residues 191 to 202 are compositionally biased toward acidic residues; sequence PAAEDDQNAEEK.

It belongs to the bacterial ribosomal protein bL9 family.

Its function is as follows. Binds to the 23S rRNA. The protein is Large ribosomal subunit protein bL9 of Nitrobacter winogradskyi (strain ATCC 25391 / DSM 10237 / CIP 104748 / NCIMB 11846 / Nb-255).